The sequence spans 341 residues: THO complex subunit 6 homolog (341 aa).

WD repeat units lie at residues 22-61, 74-112, 124-163, 166-205, 215-254, 256-293, and 295-339; these read RLHMTIFSQSVSPCGKFLAAGNNYGQIAIFSLSAALSSEA, AHDGPVYSMVSTDRHLLSAGDGEVKGWLWAEILKKGCKE, LEVPEINALLLVPKENSLILAGGDCQLHTMDLETGTFTRA, GHTDYIHCLALRERSPEVLSGGEDGAVRLWDLRIAKEVQT, SRPHNGRWIGCLATDSDWMVCGGGPALTLWHLRSSTPTTV, PIRAPQKHVTFYQDLILSAGQGCCVNHWQLSGELKAQV, and GSSP…AFSL. Ser-180 carries the phosphoserine modification.

It belongs to the WD repeat THOC6 family. In terms of assembly, component of the THO subcomplex, which is composed of THOC1, THOC2, THOC3, THOC5, THOC6 and THOC7. The THO subcomplex interacts with DDX39B to form the THO-DDX39B complex which multimerizes into a 28-subunit tetrameric assembly. Component of the transcription/export (TREX) complex at least composed of ALYREF/THOC4, DDX39B, SARNP/CIP29, CHTOP and the THO subcomplex; in the complex interacts with THOC5; together with THOC5 and THOC7, plays a key structural role in the oligomerization of the THO-DDX39B complex. TREX seems to have a dynamic structure involving ATP-dependent remodeling.

It localises to the nucleus. Its subcellular location is the nucleus speckle. Functionally, component of the THO subcomplex of the TREX complex which is thought to couple mRNA transcription, processing and nuclear export, and which specifically associates with spliced mRNA and not with unspliced pre-mRNA. Plays a key structural role in the oligomerization of the THO-DDX39B complex. TREX is recruited to spliced mRNAs by a transcription-independent mechanism, binds to mRNA upstream of the exon-junction complex (EJC) and is recruited in a splicing- and cap-dependent manner to a region near the 5' end of the mRNA where it functions in mRNA export to the cytoplasm via the TAP/NXF1 pathway. Plays a role in apoptosis negative control involved in brain development. This is THO complex subunit 6 homolog (Thoc6) from Rattus norvegicus (Rat).